The chain runs to 990 residues: Protein SUPPRESSOR OF MAX2 1 (990 aa).

One can recognise a Clp R domain in the interval Ile8–Asn167. Repeat stretches follow at residues Leu12–Leu83 and Ile96–Asn167. The interval Pro818–Gln855 is disordered. Residues Phe828–Gln832 carry the EAR motif.

The protein belongs to the ClpA/ClpB family. In terms of assembly, interacts probably with TPL/TPR in an EAR-motif dependent manner. Interacts with TPL, TPR1, TPR2 and TPR4. As to expression, highly expressed in dry seeds. Expressed in seedlings, rosette leaves and senescing leaves. Detected in roots and axillary shoots. Expressed in the primary rosette buds and expanding leaves of adult rosettes, the vasculature of the hypocotyls, cotyledons, and mature roots, in the midvein and petioles of young leaves, the young leaf periphery, stomata, and the root caps.

Its function is as follows. Probable component of a transcriptional corepressor complex that acts downstream of MAX2 to negatively regulate karrikins/strigolactone responses. Probable target of MAX2 during germination and seedling photomorphogenesis. Acts probably specifically in the karrikin pathway. This is Protein SUPPRESSOR OF MAX2 1 from Arabidopsis thaliana (Mouse-ear cress).